The primary structure comprises 210 residues: Ribosomal RNA small subunit methyltransferase G (210 aa).

S-adenosyl-L-methionine contacts are provided by residues Gly-75, Phe-80, 98–100 (EST), 126–127 (AE), and Arg-141.

Belongs to the methyltransferase superfamily. RNA methyltransferase RsmG family.

The protein localises to the cytoplasm. Functionally, specifically methylates the N7 position of a guanine in 16S rRNA. The protein is Ribosomal RNA small subunit methyltransferase G of Solibacter usitatus (strain Ellin6076).